Reading from the N-terminus, the 325-residue chain is Beta-ketoacyl-[acyl-carrier-protein] synthase III (325 aa).

Catalysis depends on residues C114 and H252. Residues 253–257 (QANFR) are ACP-binding. N282 is an active-site residue.

The protein belongs to the thiolase-like superfamily. FabH family. In terms of assembly, homodimer.

The protein localises to the cytoplasm. The catalysed reaction is malonyl-[ACP] + acetyl-CoA + H(+) = 3-oxobutanoyl-[ACP] + CO2 + CoA. The protein operates within lipid metabolism; fatty acid biosynthesis. Catalyzes the condensation reaction of fatty acid synthesis by the addition to an acyl acceptor of two carbons from malonyl-ACP. Catalyzes the first condensation reaction which initiates fatty acid synthesis and may therefore play a role in governing the total rate of fatty acid production. Possesses both acetoacetyl-ACP synthase and acetyl transacylase activities. Its substrate specificity determines the biosynthesis of branched-chain and/or straight-chain of fatty acids. This chain is Beta-ketoacyl-[acyl-carrier-protein] synthase III, found in Novosphingobium aromaticivorans (strain ATCC 700278 / DSM 12444 / CCUG 56034 / CIP 105152 / NBRC 16084 / F199).